A 186-amino-acid polypeptide reads, in one-letter code: Adenine phosphoribosyltransferase (186 aa).

Belongs to the purine/pyrimidine phosphoribosyltransferase family. As to quaternary structure, homodimer.

The protein localises to the cytoplasm. It carries out the reaction AMP + diphosphate = 5-phospho-alpha-D-ribose 1-diphosphate + adenine. Its pathway is purine metabolism; AMP biosynthesis via salvage pathway; AMP from adenine: step 1/1. In terms of biological role, catalyzes a salvage reaction resulting in the formation of AMP, that is energically less costly than de novo synthesis. The protein is Adenine phosphoribosyltransferase of Xanthomonas euvesicatoria pv. vesicatoria (strain 85-10) (Xanthomonas campestris pv. vesicatoria).